The following is a 378-amino-acid chain: UPF0754 membrane protein BALH_0780 (378 aa).

2 helical membrane-spanning segments follow: residues 1–21 and 357–377; these read MNIW…GGFT and YLGA…LLFL.

The protein belongs to the UPF0754 family.

The protein resides in the cell membrane. The polypeptide is UPF0754 membrane protein BALH_0780 (Bacillus thuringiensis (strain Al Hakam)).